We begin with the raw amino-acid sequence, 43 residues long: Neurotrophic factor BDNF (43 aa).

This sequence belongs to the NGF-beta family.

The protein localises to the secreted. Its function is as follows. Promotes the survival of neuronal populations that are all located either in the central nervous system or directly connected to it. This is Neurotrophic factor BDNF (bdnf) from Raja clavata (Thornback ray).